Here is a 367-residue protein sequence, read N- to C-terminus: uncharacterized protein (367 aa).

One can recognise an ABC transporter domain in the interval 4–234; it reads LTFEHVKKSY…PANLFVAGFI (231 aa). 36-43 serves as a coordination point for ATP; it reads GPSGCGKS.

This sequence belongs to the ABC transporter superfamily.

This is an uncharacterized protein from Bacillus subtilis (strain 168).